Here is a 295-residue protein sequence, read N- to C-terminus: uncharacterized protein (295 aa).

Residues 1–19 form the signal peptide; sequence MRKLLLIITVFFTFNVAQA.

This is an uncharacterized protein from Rickettsia conorii (strain ATCC VR-613 / Malish 7).